The chain runs to 348 residues: Dihydroorotase (348 aa).

Residues histidine 17 and histidine 19 each coordinate Zn(2+). Substrate is bound by residues 19–21 (HLR) and asparagine 45. Lysine 103, histidine 140, and histidine 178 together coordinate Zn(2+). Lysine 103 is modified (N6-carboxylysine). Position 140 (histidine 140) interacts with substrate. Leucine 223 contributes to the substrate binding site. Aspartate 251 serves as a coordination point for Zn(2+). Residue aspartate 251 is part of the active site. Substrate contacts are provided by histidine 255 and alanine 267.

It belongs to the metallo-dependent hydrolases superfamily. DHOase family. Class II DHOase subfamily. In terms of assembly, homodimer. Zn(2+) is required as a cofactor.

The enzyme catalyses (S)-dihydroorotate + H2O = N-carbamoyl-L-aspartate + H(+). It functions in the pathway pyrimidine metabolism; UMP biosynthesis via de novo pathway; (S)-dihydroorotate from bicarbonate: step 3/3. In terms of biological role, catalyzes the reversible cyclization of carbamoyl aspartate to dihydroorotate. The sequence is that of Dihydroorotase from Salmonella paratyphi C (strain RKS4594).